Here is a 183-residue protein sequence, read N- to C-terminus: uncharacterized protein (183 aa).

This is an uncharacterized protein from Acanthamoeba polyphaga (Amoeba).